Here is a 181-residue protein sequence, read N- to C-terminus: Adenylate kinase (181 aa).

Gly-10–Thr-15 contacts ATP. The interval Ser-30 to Val-59 is NMP. Residues Thr-31, Arg-36, Lys-57–Val-59, Gly-85–Arg-88, and Gln-92 each bind AMP. The segment at Ala-126–Asp-132 is LID. Arg-127 contacts ATP. 2 residues coordinate AMP: Arg-129 and Arg-140. Gly-166 lines the ATP pocket.

Belongs to the adenylate kinase family. In terms of assembly, monomer.

It localises to the cytoplasm. It carries out the reaction AMP + ATP = 2 ADP. It functions in the pathway purine metabolism; AMP biosynthesis via salvage pathway; AMP from ADP: step 1/1. In terms of biological role, catalyzes the reversible transfer of the terminal phosphate group between ATP and AMP. Plays an important role in cellular energy homeostasis and in adenine nucleotide metabolism. This Corynebacterium diphtheriae (strain ATCC 700971 / NCTC 13129 / Biotype gravis) protein is Adenylate kinase.